The following is a 148-amino-acid chain: MILLKLYLTLAAILCQSRGTTSLDLDDLMTTNPEIQNEIINKHNDLRRTVDPPAKNMLKMSWDNIIAESAKRAALRCNQNEHTPVSGRTIGGVVCGENYFMSSNPRTWSFGIQSWFDERNYFKFGFGPTRAGVMVGHYTQKERCRPEV.

Residues 1-22 (MILLKLYLTLAAILCQSRGTTS) form the signal peptide. One can recognise an SCP domain in the interval 41 to 140 (NKHNDLRRTV…AGVMVGHYTQ (100 aa)).

Belongs to the CRISP family. Post-translationally, contains 8 disulfide bonds. Expressed by the venom gland.

It localises to the secreted. In terms of biological role, blocks ryanodine receptors, and potassium channels. This chain is Cysteine-rich venom protein VAR6, found in Varanus acanthurus (Ridge-tailed monitor).